The following is a 289-amino-acid chain: Ribonuclease HII (289 aa).

Positions 1–55 are disordered; it reads MIRDQAKTPGRAKSAAAAKASPAAKGGGNEAAQSAAGKAAAKPAAKPATSKSGKG. Composition is skewed to low complexity over residues 7–24 and 31–55; these read KTPGRAKSAAAAKASPAA and AAQSAAGKAAAKPAAKPATSKSGKG. Residues 76-264 form the RNase H type-2 domain; the sequence is WPVAGCDEAG…VVAARRKHQP (189 aa). A divalent metal cation is bound by residues Asp-82, Glu-83, and Asp-173.

This sequence belongs to the RNase HII family. Mn(2+) serves as cofactor. It depends on Mg(2+) as a cofactor.

The protein localises to the cytoplasm. The enzyme catalyses Endonucleolytic cleavage to 5'-phosphomonoester.. In terms of biological role, endonuclease that specifically degrades the RNA of RNA-DNA hybrids. The chain is Ribonuclease HII from Bradyrhizobium sp. (strain BTAi1 / ATCC BAA-1182).